The primary structure comprises 132 residues: uncharacterized protein (132 aa).

The HTH merR-type domain occupies 1-69; that stretch reads MNIGEAAKKS…LDEVGKLLTL (69 aa). A DNA-binding region (H-T-H motif) is located at residues 4-23; that stretch reads GEAAKKSGLTPKMIRYYESI.

It is found in the cytoplasm. This is an uncharacterized protein from Pseudomonas aeruginosa (strain ATCC 15692 / DSM 22644 / CIP 104116 / JCM 14847 / LMG 12228 / 1C / PRS 101 / PAO1).